The sequence spans 601 residues: DNA ligase 2 (601 aa).

Glutamate 263 is an ATP binding site. Lysine 265 functions as the N6-AMP-lysine intermediate in the catalytic mechanism. 6 residues coordinate ATP: arginine 270, arginine 285, glutamate 314, phenylalanine 354, arginine 432, and lysine 438.

This sequence belongs to the ATP-dependent DNA ligase family. It depends on Mg(2+) as a cofactor.

The catalysed reaction is ATP + (deoxyribonucleotide)n-3'-hydroxyl + 5'-phospho-(deoxyribonucleotide)m = (deoxyribonucleotide)n+m + AMP + diphosphate.. Functionally, DNA ligase that seals nicks in double-stranded DNA during DNA replication, DNA recombination and DNA repair. In Thermofilum pendens (strain DSM 2475 / Hrk 5), this protein is DNA ligase 2.